The following is a 666-amino-acid chain: NADH-ubiquinone oxidoreductase chain 5 (666 aa).

17 consecutive transmembrane segments (helical) span residues 3-23 (LLILFLPLLGSLISGFGGRWL), 31-51 (FSTLCVVVSSLFSLLAFFEIG), 59-78 (IFLVSWIKSGAFYVSWGFLF), 82-101 (TVTMLVVITLVSSLVHIYSI), 119-139 (IFTFFMLILVTADNLIQMFLG), 168-190 (LIVNRVGDFGLSLGIFLIFWVFN), 211-231 (FLGFKLHVLTLISLFLFIGAI), 251-271 (TPVSALIHAATMVTAGVFLMI), 283-303 (ILFILITFGSLTAFFAAVTGV), 311-333 (VIAYSTCSQLGYMIFSCGMSCYD), 337-357 (FHLANHAFFKALLFLSAGSVI), 375-395 (FMPLTYSVMLIGTLALIGFPF), 421-441 (YISFACWLGTMSVFFTSFYSF), 467-487 (LLMIFPLIILSIGSIFAGYLI), 524-544 (WLPFILSLLGIFFASFVQIFL), 572-594 (VLYNRLIVLPILNFGYSISFKIL), and 629-649 (YLFFMIFTFCSFSIILVYSYI).

It belongs to the complex I subunit 5 family.

It is found in the mitochondrion inner membrane. It catalyses the reaction a ubiquinone + NADH + 5 H(+)(in) = a ubiquinol + NAD(+) + 4 H(+)(out). Its function is as follows. Core subunit of the mitochondrial membrane respiratory chain NADH dehydrogenase (Complex I) that is believed to belong to the minimal assembly required for catalysis. Complex I functions in the transfer of electrons from NADH to the respiratory chain. The immediate electron acceptor for the enzyme is believed to be ubiquinone. This chain is NADH-ubiquinone oxidoreductase chain 5 (ND5), found in Chondrus crispus (Carrageen Irish moss).